Reading from the N-terminus, the 86-residue chain is U15-lycotoxin-Ls1d (86 aa).

The first 20 residues, Met-1–Ser-20, serve as a signal peptide directing secretion. Positions Asp-21–Thr-66 constitute a WAP domain. Disulfide bonds link Cys-24/Cys-54, Cys-32/Cys-58, Cys-41/Cys-53, Cys-42/Cys-80, and Cys-47/Cys-62.

The protein belongs to the venom protein 11 family. 01 (wap-1) subfamily. Post-translationally, contains 5 disulfide bonds. Expressed by the venom gland.

The protein localises to the secreted. Has antibacterial activity. The protein is U15-lycotoxin-Ls1d of Lycosa singoriensis (Wolf spider).